The chain runs to 199 residues: Transgelin-2 (199 aa).

Alanine 2 is modified (N-acetylalanine). Serine 11 carries the post-translational modification Phosphoserine. 2 positions are modified to N6-acetyllysine: lysine 17 and lysine 20. The 113-residue stretch at 24–136 folds into the Calponin-homology (CH) domain; it reads ADLEQILIQW…RTLMNLGGLA (113 aa). The residue at position 163 (serine 163) is a Phosphoserine. Lysine 171 participates in a covalent cross-link: Glycyl lysine isopeptide (Lys-Gly) (interchain with G-Cter in SUMO2). A Calponin-like repeat occupies 174–199; sequence IGLQMGTNRGASQAGMTGYGMPRQIL. Threonine 180 carries the phosphothreonine modification. An omega-N-methylarginine mark is found at arginine 182 and arginine 196.

The protein belongs to the calponin family.

This Mus musculus (Mouse) protein is Transgelin-2 (Tagln2).